The following is a 109-amino-acid chain: uncharacterized protein (109 aa).

The segment at 67–96 is disordered; the sequence is YFGNKLWRPTPRSGQSGQSRPKTGPHGSQR. The segment covering 78–87 has biased composition (polar residues); it reads RSGQSGQSRP.

This is an uncharacterized protein from Saccharomyces cerevisiae (strain ATCC 204508 / S288c) (Baker's yeast).